Reading from the N-terminus, the 146-residue chain is MORN repeat-containing protein 4 (146 aa).

MORN repeat units follow at residues 16–38 (YRGEWKEGRRHGFGQLMFADGGT), 39–61 (YLGHFENGLFNGFGVLTFSDGSR), 62–84 (YEGEFAQGKFNGVGVFIRHDNMT), and 85–107 (FEGEFKNGRVDGLGLLTFPDGSH).

In terms of assembly, interacts with MYO3A. In terms of tissue distribution, retina.

Its subcellular location is the cytoplasm. It localises to the cell projection. The protein resides in the filopodium tip. It is found in the stereocilium. In terms of biological role, plays a role in promoting axonal degeneration following neuronal injury by toxic insult or trauma. In Bos taurus (Bovine), this protein is MORN repeat-containing protein 4 (MORN4).